The primary structure comprises 1144 residues: Guanine nucleotide-binding protein G(s) subunit alpha isoforms XLas (1144 aa).

Disordered regions lie at residues 1-186, 316-558, 622-657, and 735-772; these read MGML…LAPG, DDDT…PAAG, SASAAPSRAHLRPPSPEIQVADPPTPRPAPRPSAWP, and RSRSLSPGKAKDPMEERRKQMRKEAMEMREQKRADKKR. Residues 31-46 show a composition bias toward low complexity; the sequence is LEAQGAAAPGAGVGPA. Over residues 343–356 the composition is skewed to basic and acidic residues; the sequence is KSEHAKRPPLERQA. The span at 358–369 shows a compositional bias: polar residues; sequence ETGNSPISSTTA. Basic and acidic residues predominate over residues 370–381; that stretch reads EEAKVPSLERGE. Low complexity-rich tracts occupy residues 467–499 and 518–558; these read PAAAAAAEPAAEPAAEPAAEPAAEPAAEPAAEA and EPAA…PAAG. The span at 644–654 shows a compositional bias: pro residues; it reads PPTPRPAPRPS. Positions 743–767 are enriched in basic and acidic residues; it reads KAKDPMEERRKQMRKEAMEMREQKR. The stretch at 745–772 forms a coiled coil; sequence KDPMEERRKQMRKEAMEMREQKRADKKR. A G-alpha domain is found at 789 to 1144; sequence CTHRLLLLGA…RMHLRQYELL (356 aa). The tract at residues 792–805 is G1 motif; it reads RLLLLGAGESGKST. 797–805 serves as a coordination point for GTP; it reads GAGESGKST. Ser804 contacts Mg(2+). Residues 818 to 840 are disordered; it reads FNGEGGEEDPQAARSNSDGEKAT. A coiled-coil region spans residues 837–863; that stretch reads EKATKVQDIKNNLKEAIETIVAAMSNL. The segment at 946–954 is G2 motif; sequence DLPRCRVLT. Residues 947–954, 973–977, and 1042–1045 each bind GTP; these read LPRCRVLT, DVGGQ, and NKQD. Arg951 carries the post-translational modification ADP-ribosylarginine; by cholera toxin. Thr954 contributes to the Mg(2+) binding site. Residues 969-978 form a G3 motif region; that stretch reads FHMFDVGGQR. Positions 1038-1045 are G4 motif; that stretch reads ILFLNKQD. Ser1102 is subject to Phosphoserine. Residues 1114–1119 form a G5 motif region; the sequence is TCAVDT. Ala1116 contacts GTP.

The protein belongs to the G-alpha family. G(s) subfamily. G proteins are composed of 3 units; alpha, beta and gamma. The alpha chain contains the guanine nucleotide binding site. Interacts through its N-terminal region with ALEX which is produced from the same locus in a different open reading frame. This interaction may inhibit its adenylyl cyclase-stimulating activity. Interacts with MAGED2. As to expression, enriched in neuroendocrine tissues with a particularly high level of expression in pituitary where it is abundant in intermediate and anterior lobes. In adrenal gland, found in central region containing medullary chromaffin cells but not in cortex. In cerebellum, strongly expressed in perikarya of Purkinje cells. Not detected in liver, kidney or neurohypophysis.

Its subcellular location is the cell membrane. The protein resides in the apical cell membrane. Its function is as follows. Guanine nucleotide-binding proteins (G proteins) function as transducers in numerous signaling pathways controlled by G protein-coupled receptors (GPCRs). Signaling involves the activation of adenylyl cyclases, resulting in increased levels of the signaling molecule cAMP. GNAS functions downstream of several GPCRs, including beta-adrenergic receptors. XLas isoforms interact with the same set of receptors as Gnas isoforms. This is Guanine nucleotide-binding protein G(s) subunit alpha isoforms XLas from Rattus norvegicus (Rat).